A 697-amino-acid chain; its full sequence is Polyribonucleotide nucleotidyltransferase (697 aa).

Residues D489 and D495 each coordinate Mg(2+). The KH domain maps to 556-615 (PRIETIKIKPDKIREVIGSGGKVIRGITEATGVKIEIQDDGTINIASADPEATKKAIAMI). The S1 motif domain occupies 625-693 (GKTYKGRIVK…RSGRVKLSRK (69 aa)).

It belongs to the polyribonucleotide nucleotidyltransferase family. Requires Mg(2+) as cofactor.

It is found in the cytoplasm. It catalyses the reaction RNA(n+1) + phosphate = RNA(n) + a ribonucleoside 5'-diphosphate. Its function is as follows. Involved in mRNA degradation. Catalyzes the phosphorolysis of single-stranded polyribonucleotides processively in the 3'- to 5'-direction. This chain is Polyribonucleotide nucleotidyltransferase, found in Bdellovibrio bacteriovorus (strain ATCC 15356 / DSM 50701 / NCIMB 9529 / HD100).